Here is a 1047-residue protein sequence, read N- to C-terminus: Carbamoyl phosphate synthase large chain (1047 aa).

The carboxyphosphate synthetic domain stretch occupies residues 1–398; it reads MPRRDDIHRI…ALMKAIASLD (398 aa). Residues Arg-129, Arg-169, Gly-175, Gly-176, Glu-208, Leu-210, Glu-215, Gly-241, Val-242, His-243, Gln-284, and Glu-296 each contribute to the ATP site. An ATP-grasp 1 domain is found at 133–325; the sequence is YEFLKAMGEP…IARIAAKIAA (193 aa). Positions 284, 296, and 298 each coordinate Mg(2+). Positions 284, 296, and 298 each coordinate Mn(2+). Residues 399 to 539 form an oligomerization domain region; that stretch reads NAFSSNIRLH…YSTYEDEDET (141 aa). Residues 540-916 are carbamoyl phosphate synthetic domain; it reads PDLSGSIMII…ALRKSLQRSI (377 aa). The ATP-grasp 2 domain maps to 665–854; the sequence is SRVIEGLGIK…WVRLAVECMI (190 aa). 10 residues coordinate ATP: Arg-701, Lys-738, Leu-740, Glu-745, Gly-770, Val-771, His-772, Ser-773, Gln-813, and Glu-825. Residues Gln-813, Glu-825, and Asn-827 each contribute to the Mg(2+) site. 3 residues coordinate Mn(2+): Gln-813, Glu-825, and Asn-827. The 138-residue stretch at 910–1047 folds into the MGS-like domain; that stretch reads KSLQRSISSV…REIGDYLQVS (138 aa). Residues 916–1047 are allosteric domain; the sequence is ISSVLITVRD…REIGDYLQVS (132 aa).

Belongs to the CarB family. As to quaternary structure, composed of two chains; the small (or glutamine) chain promotes the hydrolysis of glutamine to ammonia, which is used by the large (or ammonia) chain to synthesize carbamoyl phosphate. Tetramer of heterodimers (alpha,beta)4. The cofactor is Mg(2+). Requires Mn(2+) as cofactor.

The catalysed reaction is hydrogencarbonate + L-glutamine + 2 ATP + H2O = carbamoyl phosphate + L-glutamate + 2 ADP + phosphate + 2 H(+). The enzyme catalyses hydrogencarbonate + NH4(+) + 2 ATP = carbamoyl phosphate + 2 ADP + phosphate + 2 H(+). It participates in amino-acid biosynthesis; L-arginine biosynthesis; carbamoyl phosphate from bicarbonate: step 1/1. Its pathway is pyrimidine metabolism; UMP biosynthesis via de novo pathway; (S)-dihydroorotate from bicarbonate: step 1/3. Large subunit of the glutamine-dependent carbamoyl phosphate synthetase (CPSase). CPSase catalyzes the formation of carbamoyl phosphate from the ammonia moiety of glutamine, carbonate, and phosphate donated by ATP, constituting the first step of 2 biosynthetic pathways, one leading to arginine and/or urea and the other to pyrimidine nucleotides. The large subunit (synthetase) binds the substrates ammonia (free or transferred from glutamine from the small subunit), hydrogencarbonate and ATP and carries out an ATP-coupled ligase reaction, activating hydrogencarbonate by forming carboxy phosphate which reacts with ammonia to form carbamoyl phosphate. In Thermoplasma acidophilum (strain ATCC 25905 / DSM 1728 / JCM 9062 / NBRC 15155 / AMRC-C165), this protein is Carbamoyl phosphate synthase large chain.